We begin with the raw amino-acid sequence, 232 residues long: Probable anion ABC transporter permease protein HVO_1887 (232 aa).

The region spanning 16-217 (TAVSLYVSTA…ALVLGVNALG (202 aa)) is the ABC transmembrane type-1 domain. The next 5 helical transmembrane spans lie at 23–43 (STAAVALSAALGLPISLAVGF), 55–75 (VISTGMGFPSVVVGLVVLLVL), 93–113 (MILSQTILALPVLVSVSLSAV), 146–166 (IVTALLAAYGRAISEVGSVLI), and 198–218 (TGIALGAILLALVLGVNALGA).

The protein belongs to the binding-protein-dependent transport system permease family. The complex is composed of two ATP-binding proteins (HVO_1886), two transmembrane proteins (HVO_1887) and a solute-binding protein (HVO_1888).

Its subcellular location is the cell membrane. Functionally, part of an ABC transporter complex involved in anions import. Responsible for the translocation of the substrate across the membrane. This is Probable anion ABC transporter permease protein HVO_1887 from Haloferax volcanii (strain ATCC 29605 / DSM 3757 / JCM 8879 / NBRC 14742 / NCIMB 2012 / VKM B-1768 / DS2) (Halobacterium volcanii).